Here is a 146-residue protein sequence, read N- to C-terminus: Hemoglobin subunit beta (146 aa).

A Globin domain is found at 2–146; the sequence is QWTAEEKQLI…VAHALARKYH (145 aa). Heme b-binding residues include H63 and H92.

Belongs to the globin family. In terms of assembly, heterotetramer of two alpha chains and two beta chains. As to expression, red blood cells.

Its function is as follows. Involved in oxygen transport from the lung to the various peripheral tissues. In Passer montanus (Eurasian tree sparrow), this protein is Hemoglobin subunit beta (HBB).